Reading from the N-terminus, the 113-residue chain is Large ribosomal subunit protein uL22 (113 aa).

The protein belongs to the universal ribosomal protein uL22 family. Part of the 50S ribosomal subunit.

This protein binds specifically to 23S rRNA; its binding is stimulated by other ribosomal proteins, e.g. L4, L17, and L20. It is important during the early stages of 50S assembly. It makes multiple contacts with different domains of the 23S rRNA in the assembled 50S subunit and ribosome. Functionally, the globular domain of the protein is located near the polypeptide exit tunnel on the outside of the subunit, while an extended beta-hairpin is found that lines the wall of the exit tunnel in the center of the 70S ribosome. The chain is Large ribosomal subunit protein uL22 from Natranaerobius thermophilus (strain ATCC BAA-1301 / DSM 18059 / JW/NM-WN-LF).